The following is an 86-amino-acid chain: Small ribosomal subunit protein bS20 (86 aa).

A compositionally biased stretch (basic residues) spans 1–11; it reads MANIKSAKKRA. The segment at 1-26 is disordered; the sequence is MANIKSAKKRAITSEKNRQHNASRRS.

This sequence belongs to the bacterial ribosomal protein bS20 family.

Functionally, binds directly to 16S ribosomal RNA. This chain is Small ribosomal subunit protein bS20, found in Pseudoalteromonas translucida (strain TAC 125).